Consider the following 328-residue polypeptide: Phenylalanine--tRNA ligase alpha subunit (328 aa).

Residue E245 coordinates Mg(2+).

This sequence belongs to the class-II aminoacyl-tRNA synthetase family. Phe-tRNA synthetase alpha subunit type 1 subfamily. As to quaternary structure, tetramer of two alpha and two beta subunits. Requires Mg(2+) as cofactor.

Its subcellular location is the cytoplasm. It catalyses the reaction tRNA(Phe) + L-phenylalanine + ATP = L-phenylalanyl-tRNA(Phe) + AMP + diphosphate + H(+). The chain is Phenylalanine--tRNA ligase alpha subunit from Helicobacter acinonychis (strain Sheeba).